We begin with the raw amino-acid sequence, 309 residues long: Porphobilinogen deaminase (309 aa).

The residue at position 241 (Cys241) is an S-(dipyrrolylmethanemethyl)cysteine.

Belongs to the HMBS family. As to quaternary structure, monomer. Requires dipyrromethane as cofactor.

The enzyme catalyses 4 porphobilinogen + H2O = hydroxymethylbilane + 4 NH4(+). Its pathway is porphyrin-containing compound metabolism; protoporphyrin-IX biosynthesis; coproporphyrinogen-III from 5-aminolevulinate: step 2/4. Its function is as follows. Tetrapolymerization of the monopyrrole PBG into the hydroxymethylbilane pre-uroporphyrinogen in several discrete steps. This is Porphobilinogen deaminase from Bacillus cereus (strain ZK / E33L).